The chain runs to 93 residues: Defensin-like protein 209 (93 aa).

An N-terminal signal peptide occupies residues 1-19; sequence MKITILFLTLLVLSSSCTS. 3 disulfides stabilise this stretch: C63-C80, C66-C85, and C70-C87.

This sequence belongs to the DEFL family.

The protein localises to the secreted. The polypeptide is Defensin-like protein 209 (Arabidopsis thaliana (Mouse-ear cress)).